The chain runs to 497 residues: Pseudooxynicotine dehydrogenase (497 aa).

The segment at residues 1 to 43 (MANDKGDISKDGVSRRKFLGGAVIGAAAAAGVGSQILSLSATA) is a signal peptide (tat-type signal). Residues Ala70, Glu89, Arg97, Trp114, Val286, Ser462, and Ile472 each coordinate FAD.

This sequence belongs to the flavin monoamine oxidase family. Homodimer. FAD is required as a cofactor. In terms of processing, predicted to be exported by the Tat system. The position of the signal peptide cleavage has not been experimentally proven.

The protein localises to the periplasm. It catalyses the reaction pseudooxynicotine + 2 Fe(III)-[cytochrome c] + H2O = 4-oxo-4-(pyridin-3-yl)butanal + methylamine + 2 Fe(II)-[cytochrome c] + 2 H(+). The protein operates within alkaloid degradation; nicotine degradation. Strongly inhibited by Ag(+), Co(2+), Cu(2+) and Hg(2+). Functionally, involved in nicotine degradation. Catalyzes the deamination of pseudooxynicotine to 3-succinoylsemialdehyde-pyridine. This is Pseudooxynicotine dehydrogenase from Pseudomonas sp.